The chain runs to 173 residues: Crossover junction endodeoxyribonuclease RuvC (173 aa).

Residues D8, E67, and D139 contribute to the active site. Mg(2+)-binding residues include D8, E67, and D139.

Belongs to the RuvC family. Homodimer which binds Holliday junction (HJ) DNA. The HJ becomes 2-fold symmetrical on binding to RuvC with unstacked arms; it has a different conformation from HJ DNA in complex with RuvA. In the full resolvosome a probable DNA-RuvA(4)-RuvB(12)-RuvC(2) complex forms which resolves the HJ. It depends on Mg(2+) as a cofactor.

Its subcellular location is the cytoplasm. It catalyses the reaction Endonucleolytic cleavage at a junction such as a reciprocal single-stranded crossover between two homologous DNA duplexes (Holliday junction).. Functionally, the RuvA-RuvB-RuvC complex processes Holliday junction (HJ) DNA during genetic recombination and DNA repair. Endonuclease that resolves HJ intermediates. Cleaves cruciform DNA by making single-stranded nicks across the HJ at symmetrical positions within the homologous arms, yielding a 5'-phosphate and a 3'-hydroxyl group; requires a central core of homology in the junction. The consensus cleavage sequence is 5'-(A/T)TT(C/G)-3'. Cleavage occurs on the 3'-side of the TT dinucleotide at the point of strand exchange. HJ branch migration catalyzed by RuvA-RuvB allows RuvC to scan DNA until it finds its consensus sequence, where it cleaves and resolves the cruciform DNA. The sequence is that of Crossover junction endodeoxyribonuclease RuvC from Shewanella sp. (strain MR-4).